A 359-amino-acid chain; its full sequence is Peptide chain release factor 1 (359 aa).

Glutamine 235 carries the post-translational modification N5-methylglutamine.

Belongs to the prokaryotic/mitochondrial release factor family. In terms of processing, methylated by PrmC. Methylation increases the termination efficiency of RF1.

It localises to the cytoplasm. Its function is as follows. Peptide chain release factor 1 directs the termination of translation in response to the peptide chain termination codons UAG and UAA. This is Peptide chain release factor 1 from Polynucleobacter necessarius subsp. necessarius (strain STIR1).